The following is a 147-amino-acid chain: UPF0735 ACT domain-containing protein GTNG_2535 (147 aa).

Residues threonine 69–serine 144 enclose the ACT domain.

It belongs to the UPF0735 family.

The polypeptide is UPF0735 ACT domain-containing protein GTNG_2535 (Geobacillus thermodenitrificans (strain NG80-2)).